A 263-amino-acid chain; its full sequence is Type-2Bb cytolytic delta-endotoxin (263 aa).

Belongs to the cyt1/cyt2 endotoxin family. Post-translationally, active after proteolytic processing.

Its function is as follows. Kills the larvae of dipteran insects by making pores in the epithelial cell membrane of the insect midgut. In Bacillus thuringiensis subsp. jegathesan, this protein is Type-2Bb cytolytic delta-endotoxin (cyt2Bb1).